The primary structure comprises 210 residues: Large ribosomal subunit protein uL3 (210 aa).

This sequence belongs to the universal ribosomal protein uL3 family. Part of the 50S ribosomal subunit. Forms a cluster with proteins L14 and L19.

In terms of biological role, one of the primary rRNA binding proteins, it binds directly near the 3'-end of the 23S rRNA, where it nucleates assembly of the 50S subunit. This is Large ribosomal subunit protein uL3 from Lawsonia intracellularis (strain PHE/MN1-00).